Reading from the N-terminus, the 151-residue chain is 3-hydroxyacyl-[acyl-carrier-protein] dehydratase FabZ (151 aa).

Histidine 56 is an active-site residue.

The protein belongs to the thioester dehydratase family. FabZ subfamily.

Its subcellular location is the cytoplasm. It catalyses the reaction a (3R)-hydroxyacyl-[ACP] = a (2E)-enoyl-[ACP] + H2O. Involved in unsaturated fatty acids biosynthesis. Catalyzes the dehydration of short chain beta-hydroxyacyl-ACPs and long chain saturated and unsaturated beta-hydroxyacyl-ACPs. This Rhodopseudomonas palustris (strain ATCC BAA-98 / CGA009) protein is 3-hydroxyacyl-[acyl-carrier-protein] dehydratase FabZ.